A 502-amino-acid chain; its full sequence is L-amino-acid oxidase BmooLAAO-I (502 aa).

Residues 1 to 18 (MNVFFTFSLLFLAALGSC) form the signal peptide. Cys-28 and Cys-191 form a disulfide bridge. Residues 61-62 (MS), 81-82 (EA), Arg-89, and 105-108 (GPMR) contribute to the FAD site. Arg-108 contributes to the substrate binding site. Asn-190 is a glycosylation site (N-linked (GlcNAc...) asparagine). A substrate-binding site is contributed by His-241. Val-279 lines the FAD pocket. A disulfide bond links Cys-349 and Cys-430. Residue Tyr-390 coordinates substrate. Residues Glu-475 and 482-487 (GWIDST) contribute to the FAD site. 482-483 (GW) serves as a coordination point for substrate.

The protein belongs to the flavin monoamine oxidase family. FIG1 subfamily. Homodimer; non-covalently linked. FAD is required as a cofactor. Post-translationally, N-glycosylated. The enzymatic activity is not affected by deglycosylation. In terms of tissue distribution, expressed by the venom gland.

Its subcellular location is the secreted. The catalysed reaction is an L-alpha-amino acid + O2 + H2O = a 2-oxocarboxylate + H2O2 + NH4(+). It catalyses the reaction L-leucine + O2 + H2O = 4-methyl-2-oxopentanoate + H2O2 + NH4(+). It carries out the reaction L-phenylalanine + O2 + H2O = 3-phenylpyruvate + H2O2 + NH4(+). The enzyme catalyses L-tryptophan + O2 + H2O = indole-3-pyruvate + H2O2 + NH4(+). The catalysed reaction is L-methionine + O2 + H2O = 4-methylsulfanyl-2-oxobutanoate + H2O2 + NH4(+). It catalyses the reaction L-isoleucine + O2 + H2O = (S)-3-methyl-2-oxopentanoate + H2O2 + NH4(+). It carries out the reaction L-histidine + O2 + H2O = 3-(imidazol-5-yl)pyruvate + H2O2 + NH4(+). The enzyme catalyses L-tyrosine + O2 + H2O = 3-(4-hydroxyphenyl)pyruvate + H2O2 + NH4(+). The catalysed reaction is L-alanine + O2 + H2O = pyruvate + H2O2 + NH4(+). It catalyses the reaction L-valine + O2 + H2O = 3-methyl-2-oxobutanoate + H2O2 + NH4(+). Its enzymatic activities is reduced when it is exposed to Ca(2+), Zn(2+), Al(3+), Cu(2+) or Ni(2+) salts. Catalyzes an oxidative deamination of predominantly hydrophobic and aromatic L-amino acids, thus producing hydrogen peroxide that may contribute to the toxicity of the venom. Shows very high activity on L-Met, and L-Leu, high activity on L-Ile, L-Phe and L-Tyr and moderate activity on L-His, L-Val and L-Ala. Exhibits diverse biological activities, such as edema, apoptosis of tumor cell lines, antibacterial activities against both Gram-positive and Gram-negative bacteria, as well as induction of platelet aggregation. Effects of snake L-amino oxidases on platelets are controversial, since they either induce aggregation or inhibit agonist-induced aggregation. These different effects are probably due to different experimental conditions. Unlike other snake venom L-amino acid oxidases, does not induce hemorrhage. It may also induce hemolysis. Has parasiticidal activities against and leishmania, as a result of enzyme-catalyzed hydrogen peroxide production. The sequence is that of L-amino-acid oxidase BmooLAAO-I from Bothrops moojeni (Lance-headed viper).